The chain runs to 146 residues: Ribosome maturation factor RimP (146 aa).

It belongs to the RimP family.

The protein localises to the cytoplasm. Required for maturation of 30S ribosomal subunits. This Dechloromonas aromatica (strain RCB) protein is Ribosome maturation factor RimP.